The primary structure comprises 3051 residues: Biorientation of chromosomes in cell division protein 1-like 1 (3051 aa).

Over residues 1–33 (MATNPQPQPPPPAPPPPPPQPQPQPPPPPPGPG) the composition is skewed to pro residues. 5 disordered regions span residues 1-47 (MATN…AGAG), 164-197 (HKEE…SANV), 215-288 (ASAA…CPVE), 301-393 (ILLN…KEDF), and 411-469 (VHTS…VRHA). Positions 34-47 (AGPGAGGAGGAGAG) are enriched in gly residues. Positions 215–227 (ASAARASTETSNA) are enriched in low complexity. A compositionally biased stretch (basic and acidic residues) spans 246–263 (STDKERTSEDMADKEKST). At S266 the chain carries Phosphoserine. Residues 312–393 (SEQKNKSTDK…KTVEGTKEDF (82 aa)) show a composition bias toward basic and acidic residues. Positions 418-443 (SFEEDTEEEVVTSDSMEEGEITSDDE) are enriched in acidic residues. K473 carries the post-translational modification N6-acetyllysine. 2 positions are modified to phosphoserine: S482 and S484. Basic and acidic residues-rich tracts occupy residues 497 to 527 (IAKE…EKTK), 549 to 570 (LEPK…EKKV), and 580 to 653 (SRNV…LERE). Residues 497–1203 (IAKEKEERLL…EKHADHRSTL (707 aa)) form a disordered region. Phosphoserine occurs at positions 635 and 659. 2 positions are modified to phosphothreonine: T660 and T733. Basic and acidic residues-rich tracts occupy residues 671 to 772 (TDTR…EENI), 804 to 852 (KDGK…KIQK), 866 to 878 (RRSE…KCDM), 940 to 966 (KPDK…KPFE), 984 to 1021 (TQKD…DGHK), and 1028 to 1075 (SSKD…ENRR). Position 1077 is a phosphoserine (S1077). 2 stretches are compositionally biased toward polar residues: residues 1092 to 1103 (NTLSTPSGSSLQ) and 1135 to 1148 (SKTQ…SQQD). Residues S1145 and S1318 each carry the phosphoserine modification. T1354 bears the Phosphothreonine mark. 3 disordered regions span residues 1456–1550 (KLKH…QSEV), 1700–1725 (GSIS…ETEG), and 1760–1890 (VVLG…TGLG). Over residues 1465-1479 (KVKDISIDVERRNEN) the composition is skewed to basic and acidic residues. Polar residues predominate over residues 1482 to 1504 (VDTSAGSGSAPSVLHQRNGQTED). Phosphoserine is present on residues S1531, S1701, and S1710. S2013, S2025, S2128, and S2203 each carry phosphoserine. Disordered regions lie at residues 2189 to 2210 (DFEG…STSK), 2258 to 2285 (TSSV…TPAE), 2403 to 2447 (STEE…FAGR), 2472 to 2519 (EDKS…AKDP), 2615 to 2635 (DQAS…FPEE), and 2717 to 3051 (VENS…KAKR). Residues 2191–2207 (EGPMPSAPPEAESPLAS) are compositionally biased toward low complexity. Residues 2428–2439 (AEKEEKHGKECP) show a composition bias toward basic and acidic residues. S2475 carries the phosphoserine modification. Residues 2483–2492 (GSSTASYSAG) show a composition bias toward low complexity. Phosphoserine is present on residues S2501 and S2618. Basic and acidic residues-rich tracts occupy residues 2621–2633 (KTGD…KSFP), 2724–2746 (TNEE…KDNA), and 2754–2767 (VEAD…EERH). The segment covering 2780-2789 (SEDEPDDNPD) has biased composition (acidic residues). Positions 2791 to 2822 (LDSRIETAQRQCPETEPHDTKEENSRDLEELP) are enriched in basic and acidic residues. Polar residues predominate over residues 2823–2834 (KTSSETNSTTSR). Residues 2848-2864 (TGEKPEQNDDDTIKSQE) show a composition bias toward basic and acidic residues. Basic residues predominate over residues 2871–2880 (IKRKRGRPRK). The a.T hook DNA-binding region spans 2872–2884 (KRKRGRPRKYPVE). Residues 2896–2910 (DTGIVTVEQSPSSSK) show a composition bias toward polar residues. A phosphoserine mark is found at S2905 and S2907. The span at 2944 to 2953 (VRRRGRKPKR) shows a compositional bias: basic residues. S2954 carries the phosphoserine modification. At T2956 the chain carries Phosphothreonine. S2958, S2964, and S2973 each carry phosphoserine. Glycyl lysine isopeptide (Lys-Gly) (interchain with G-Cter in ubiquitin) cross-links involve residues K2981 and K2982. Residues 2985–2998 (ESDEEEEEEEEDEP) show a composition bias toward acidic residues. Residues S2986 and S3019 each carry the phosphoserine modification. A compositionally biased stretch (polar residues) spans 3000 to 3020 (GATTRSTTRSEAQRSKTQLSP). Positions 3039-3051 (QRVEEAPVKKAKR) are enriched in basic and acidic residues.

It belongs to the BOD1 family. In terms of assembly, interacts (via COMPASS-Shg1 domain) with SETD1A at stalled replication forks; this interaction mediates FANCD2-dependent nucleosome remodeling at reversed forks protecting them from nucleolytic degradation.

It localises to the chromosome. Its function is as follows. Component of the fork protection machinery required to protect stalled/damaged replication forks from uncontrolled DNA2-dependent resection. Acts by stabilizing RAD51 at stalled replication forks and protecting RAD51 nucleofilaments from the antirecombinogenic activities of FBH1 and BLM. Does not regulate spindle orientation. The polypeptide is Biorientation of chromosomes in cell division protein 1-like 1 (Homo sapiens (Human)).